Reading from the N-terminus, the 216-residue chain is Large ribosomal subunit protein uL3 (216 aa).

2 disordered regions span residues 89–108 (QRASDEEMPETGGSIDVGGF) and 139–158 (NTHGNSKSHRVPGSIGQCQS). An N5-methylglutamine modification is found at Q157.

Belongs to the universal ribosomal protein uL3 family. In terms of assembly, part of the 50S ribosomal subunit. Forms a cluster with proteins L14 and L19. Methylated by PrmB.

In terms of biological role, one of the primary rRNA binding proteins, it binds directly near the 3'-end of the 23S rRNA, where it nucleates assembly of the 50S subunit. This chain is Large ribosomal subunit protein uL3, found in Halorhodospira halophila (strain DSM 244 / SL1) (Ectothiorhodospira halophila (strain DSM 244 / SL1)).